Here is a 443-residue protein sequence, read N- to C-terminus: Inactive polypeptide N-acetylgalactosaminyltransferase-like protein 5 (443 aa).

At 1–4 (MRNA) the chain is on the cytoplasmic side. The chain crosses the membrane as a helical; Signal-anchor for type II membrane protein span at residues 5 to 27 (IIRCLFYGSLTFGIWTALLFIYL). Residues 28–443 (HHNHVSNWQK…PELEASVNRS (416 aa)) are Lumenal-facing. Asparagine 87 carries an N-linked (GlcNAc...) asparagine glycan. 2 disulfides stabilise this stretch: cysteine 124/cysteine 355 and cysteine 346/cysteine 422. The tract at residues 133-243 (LPTASIVICF…RVWLEPLLHA (111 aa)) is catalytic subdomain A. 2 residues coordinate substrate: aspartate 174 and arginine 204. Aspartate 227 lines the Mn(2+) pocket. Substrate is bound at residue serine 228. Position 229 (histidine 229) interacts with Mn(2+). The tract at residues 301 to 363 (PIRSPAMSGG…PCSRVGHISK (63 aa)) is catalytic subdomain B. Residue tryptophan 332 coordinates substrate. Mn(2+) is bound at residue histidine 360.

Belongs to the glycosyltransferase 2 family. GalNAc-T subfamily. It depends on Mn(2+) as a cofactor. In terms of tissue distribution, expressed in testis.

It is found in the late endosome membrane. In terms of biological role, probable inactive glycosyltransferase required during spermatid development. May participate in protein loading into the acrosomes and accumulation of ubiquitin-proteasome systems around the head-tail coupling apparatus region. The protein is Inactive polypeptide N-acetylgalactosaminyltransferase-like protein 5 (GALNTL5) of Macaca fascicularis (Crab-eating macaque).